Reading from the N-terminus, the 387-residue chain is Patatin group D-2 (387 aa).

An N-terminal signal peptide occupies residues 1–23 (MATTKSFLILIVMILATTSSTFA). The region spanning 32–230 (LSIDGGGIKG…TVADPALLSI (199 aa)) is the PNPLA domain. Positions 36-41 (GGGIKG) match the GXGXXG motif. Residues 75-79 (GTSTG) carry the GXSXG motif. Serine 77 serves as the catalytic Nucleophile. N-linked (GlcNAc...) asparagine glycosylation is present at asparagine 115. The Proton acceptor role is filled by aspartate 216. A DGA/G motif is present at residues 216-218 (DGA). Residues 361–385 (ETYEEALKRFAKLLSDRKKLRANKA) adopt a coiled-coil conformation.

The protein belongs to the patatin family. Tuber.

The protein resides in the vacuole. Functionally, probable lipolytic acyl hydrolase (LAH), an activity which is thought to be involved in the response of tubers to pathogens. This is Patatin group D-2 from Solanum tuberosum (Potato).